The chain runs to 1179 residues: DNA-directed RNA polymerase subunit beta' (1179 aa).

Zn(2+)-binding residues include cysteine 60, cysteine 62, cysteine 75, and cysteine 78. The Mg(2+) site is built by aspartate 450, aspartate 452, and aspartate 454. Cysteine 791, cysteine 865, cysteine 872, and cysteine 875 together coordinate Zn(2+).

The protein belongs to the RNA polymerase beta' chain family. In terms of assembly, the RNAP catalytic core consists of 2 alpha, 1 beta, 1 beta' and 1 omega subunit. When a sigma factor is associated with the core the holoenzyme is formed, which can initiate transcription. Mg(2+) serves as cofactor. Requires Zn(2+) as cofactor.

It catalyses the reaction RNA(n) + a ribonucleoside 5'-triphosphate = RNA(n+1) + diphosphate. DNA-dependent RNA polymerase catalyzes the transcription of DNA into RNA using the four ribonucleoside triphosphates as substrates. The sequence is that of DNA-directed RNA polymerase subunit beta' from Alkaliphilus oremlandii (strain OhILAs) (Clostridium oremlandii (strain OhILAs)).